Reading from the N-terminus, the 330-residue chain is MKKSFIHQQEEISFVKNTFTQYLIAKLDVVEVQGPILSRVGDGMQDNLSGIENPVSVNVLKIPEAQFEVVHSLAKWKRHTLARFGFNEGEGLVVNMKALRPDEDSLDQTHSVYVDQWDWEKVIPDGKRNLAYLKETVETIYKVIRLTELAVEARYDIEAILPKKITFIHTEDLVKRYPDLSPKERENAITKEFGAVFLIGIGGELSDGKPHDGRAPDYDDWTSETEDGYHGLNGDILVWNEQLQSAFELSSMGIRVDEDALKRQVAITGDFDRLEFDWHKSLLNGLFPLTIGGGIGQSRMAMFLLRKKHIGEVQTSVWPQSVRESFDNIL.

The protein belongs to the class-II aminoacyl-tRNA synthetase family. AsnA subfamily.

It localises to the cytoplasm. It carries out the reaction L-aspartate + NH4(+) + ATP = L-asparagine + AMP + diphosphate + H(+). Its pathway is amino-acid biosynthesis; L-asparagine biosynthesis; L-asparagine from L-aspartate (ammonia route): step 1/1. This is Aspartate--ammonia ligase from Streptococcus uberis (strain ATCC BAA-854 / 0140J).